We begin with the raw amino-acid sequence, 243 residues long: 1-(5-phosphoribosyl)-5-[(5-phosphoribosylamino)methylideneamino] imidazole-4-carboxamide isomerase (243 aa).

The active-site Proton acceptor is the Asp8. The active-site Proton donor is Asp130.

It belongs to the HisA/HisF family.

Its subcellular location is the cytoplasm. The enzyme catalyses 1-(5-phospho-beta-D-ribosyl)-5-[(5-phospho-beta-D-ribosylamino)methylideneamino]imidazole-4-carboxamide = 5-[(5-phospho-1-deoxy-D-ribulos-1-ylimino)methylamino]-1-(5-phospho-beta-D-ribosyl)imidazole-4-carboxamide. It functions in the pathway amino-acid biosynthesis; L-histidine biosynthesis; L-histidine from 5-phospho-alpha-D-ribose 1-diphosphate: step 4/9. The protein is 1-(5-phosphoribosyl)-5-[(5-phosphoribosylamino)methylideneamino] imidazole-4-carboxamide isomerase of Acinetobacter baumannii (strain AB307-0294).